Here is a 254-residue protein sequence, read N- to C-terminus: Thiazole synthase (254 aa).

Lysine 95 (schiff-base intermediate with DXP) is an active-site residue. 1-deoxy-D-xylulose 5-phosphate is bound by residues glycine 156, alanine 182–glycine 183, and asparagine 204–threonine 205.

This sequence belongs to the ThiG family. As to quaternary structure, homotetramer. Forms heterodimers with either ThiH or ThiS.

The protein resides in the cytoplasm. The enzyme catalyses [ThiS sulfur-carrier protein]-C-terminal-Gly-aminoethanethioate + 2-iminoacetate + 1-deoxy-D-xylulose 5-phosphate = [ThiS sulfur-carrier protein]-C-terminal Gly-Gly + 2-[(2R,5Z)-2-carboxy-4-methylthiazol-5(2H)-ylidene]ethyl phosphate + 2 H2O + H(+). It participates in cofactor biosynthesis; thiamine diphosphate biosynthesis. Functionally, catalyzes the rearrangement of 1-deoxy-D-xylulose 5-phosphate (DXP) to produce the thiazole phosphate moiety of thiamine. Sulfur is provided by the thiocarboxylate moiety of the carrier protein ThiS. In vitro, sulfur can be provided by H(2)S. In Vibrio atlanticus (strain LGP32) (Vibrio splendidus (strain Mel32)), this protein is Thiazole synthase.